We begin with the raw amino-acid sequence, 213 residues long: Large ribosomal subunit protein uL18c (213 aa).

This sequence belongs to the universal ribosomal protein uL18 family.

The protein resides in the plastid. Its subcellular location is the apicoplast. This is Large ribosomal subunit protein uL18c (RPL18) from Plasmodium falciparum (isolate 3D7).